Consider the following 78-residue polypeptide: Large ribosomal subunit protein bL28 (78 aa).

The interval 1–22 is disordered; it reads MSRVCQVTGKRPMSGNNRSHAM.

It belongs to the bacterial ribosomal protein bL28 family.

This is Large ribosomal subunit protein bL28 from Yersinia pseudotuberculosis serotype O:1b (strain IP 31758).